A 545-amino-acid chain; its full sequence is Chaperonin GroEL 2 (545 aa).

ATP-binding positions include 29 to 32, 86 to 90, Gly413, 477 to 479, and Asp493; these read TLGP, DGTTT, and DAA. The segment at 526–545 is disordered; it reads PEPAAAGHGHGHGHQHGPGF. Residues 534-545 are compositionally biased toward basic residues; sequence GHGHGHQHGPGF.

The protein belongs to the chaperonin (HSP60) family. In terms of assembly, forms a cylinder of 14 subunits composed of two heptameric rings stacked back-to-back. Interacts with the co-chaperonin GroES.

The protein localises to the cytoplasm. It catalyses the reaction ATP + H2O + a folded polypeptide = ADP + phosphate + an unfolded polypeptide.. Together with its co-chaperonin GroES, plays an essential role in assisting protein folding. The GroEL-GroES system forms a nano-cage that allows encapsulation of the non-native substrate proteins and provides a physical environment optimized to promote and accelerate protein folding. The sequence is that of Chaperonin GroEL 2 from Salinispora arenicola (strain CNS-205).